Consider the following 461-residue polypeptide: MEDLDALLSDLETTTSHMSRLGAPKERPPETLTPPPPYGHQPQTGSGESSGTTGDKDHLYSTVCKPRSPKPVAPVAPPFSSSSGVLGNGLCELDRLLQELNATQFNITDEIMSQFPSSKMAEGEEKEDQSEDKSSPTVPPSPFPAPSKPSATSATQELDRLMASLSDFRVQNHLPASGPPQPPAASPTREGCPSPPGQTSKGSLDTMLGLLQSDLSRRGVPTQAKGLCGSCNKPIAGQVVTALGRAWHPEHFLCSGCSTTLGGSSFFEKDGAPFCPECYFERFSPRCGFCNQPIRHKMVTALGTHWHPEHFCCVSCGEPFGEEGFHEREGRPYCRRDFLQLFAPRCQGCQGPILDNYISALSALWHPDCFVCRECLAPFSGGSFFEHEGRPLCENHFHAQRGSLCATCGLPVTGRCVSALGRRFHPDHFTCTFCLRPLTKGSFQERASKPYCQPCFLKLFG.

An N-acetylmethionine modification is found at M1. Residues 1–87 (MEDLDALLSD…PFSSSSGVLG (87 aa)) form a disordered region. Residues 1–200 (MEDLDALLSD…GCPSPPGQTS (200 aa)) form a transcription activation region. Residues 1–240 (MEDLDALLSD…CNKPIAGQVV (240 aa)) are interaction with PTK2B/PYK2. The LD motif 1 motif lies at 3 to 15 (DLDALLSDLETTT). T33 is modified (phosphothreonine). At Y38 the chain carries Phosphotyrosine. Residues 44 to 53 (TGSGESSGTT) show a composition bias toward low complexity. At Y60 the chain carries Phosphotyrosine. A Phosphoserine modification is found at S68. The segment at 83–136 (SGVLGNGLCELDRLLQELNATQFNITDEIMSQFPSSKMAEGEEKEDQSEDKSSP) is interaction with PTK2/FAK1. The short motif at 92 to 104 (ELDRLLQELNATQ) is the LD motif 2 element. A disordered region spans residues 116-154 (PSSKMAEGEEKEDQSEDKSSPTVPPSPFPAPSKPSATSA). Over residues 137–147 (TVPPSPFPAPS) the composition is skewed to pro residues. Residues S141, S164, and S186 each carry the phosphoserine modification. Positions 157–168 (ELDRLMASLSDF) match the LD motif 3 motif. Residues 171–204 (QNHLPASGPPQPPAASPTREGCPSPPGQTSKGSL) form a disordered region. T188 is modified (phosphothreonine). A Phosphoserine modification is found at S194. Residues 203–215 (SLDTMLGLLQSDL) carry the LD motif 4 motif. 4 consecutive LIM zinc-binding domains span residues 226–285 (GLCG…RFSP), 286–343 (RCGF…QLFA), 344–403 (PRCQ…QRGS), and 404–461 (LCAT…KLFG). S403 carries the post-translational modification Phosphoserine. T407 carries the phosphothreonine modification.

This sequence belongs to the paxillin family. Homooligomer. Interacts with PPARG. Interacts with TRAF4. Interacts with CRIP2. Interacts with HSPB1. Interacts with ILK. Interacts with LIMS1 and LIMS2. Interacts with NCK2. Interacts with NUDT16L1. Interacts with PAK. Interacts with PTPN12. Interacts with TCF3. Interacts with TCF7L2. Interacts with VCL. Interacts (via LD motif 3) with GIT1. Also interacts with GIT2. Forms a complex with ARHGEF7. Interacts with AR/androgen receptor in a ligand-dependent manner. Interacts with CSK. Interacts with PTK2/FAK1 and PTK2B/PYK2. Interacts with SLC6A3. Interacts with SLC6A4. Interacts with NR3C1. Interacts with SMAD3. Interacts with MAPK15. Interacts with SRC. Interacts with LYN. Interacts with talin. Interacts (via LIM zinc-binding domain 2) with CBLC (via RING-type zinc finger); the interaction is direct and enhances CBLC E3 ubiquitin-protein ligase activity. Interacts with PARVA. Interacts with PXN. Post-translationally, phosphorylated by gonadotropin-releasing hormone-activated SRC. In terms of tissue distribution, ubiquitously expressed. Higher expression is detected in lung and spleen. Expression decreases during pregnancy in mammary glands. Expressed in all brain areas, with higher levels in cerebellum, prefrontal cortex and hypothalamus. Expressed in smooth muscle, myoepithelial cells and platelets (at protein level). Preferentially expressed in mesenchymal versus epithelial cells (at protein level).

The protein localises to the cell junction. It localises to the focal adhesion. Its subcellular location is the nucleus matrix. It is found in the cytoplasm. The protein resides in the cytoskeleton. In terms of biological role, functions as a molecular adapter coordinating multiple protein-protein interactions at the focal adhesion complex and in the nucleus. Links various intracellular signaling modules to plasma membrane receptors and regulates the Wnt and TGFB signaling pathways. May also regulate SLC6A3 and SLC6A4 targeting to the plasma membrane hence regulating their activity. In the nucleus, functions as a nuclear receptor coactivator regulating glucocorticoid, androgen, mineralocorticoid and progesterone receptor transcriptional activity. May play a role in the processes of cell growth, proliferation, migration, differentiation and senescence. May have a zinc-dependent DNA-binding activity. In Mus musculus (Mouse), this protein is Transforming growth factor beta-1-induced transcript 1 protein (Tgfb1i1).